Here is a 298-residue protein sequence, read N- to C-terminus: GTPase Era (298 aa).

Positions Arg8–Glu176 constitute an Era-type G domain. Residues Gly16–Ser23 form a G1 region. Gly16–Ser23 contacts GTP. A G2 region spans residues Gln42–His46. The segment at Asp63 to Gly66 is G3. GTP-binding positions include Asp63–Leu67 and Asn125–Asp128. A G4 region spans residues Asn125 to Asp128. Residues Val155–Ala157 are G5. The KH type-2 domain maps to Val199–Glu283.

It belongs to the TRAFAC class TrmE-Era-EngA-EngB-Septin-like GTPase superfamily. Era GTPase family. As to quaternary structure, monomer.

Its subcellular location is the cytoplasm. The protein localises to the cell inner membrane. Its function is as follows. An essential GTPase that binds both GDP and GTP, with rapid nucleotide exchange. Plays a role in 16S rRNA processing and 30S ribosomal subunit biogenesis and possibly also in cell cycle regulation and energy metabolism. The chain is GTPase Era from Xanthomonas campestris pv. campestris (strain 8004).